A 497-amino-acid polypeptide reads, in one-letter code: MRFTQIVAAALCLGATEAAVAPIDRARKVLGNQHAFDKRDASGDTAKAPKHLTSKNKKFYVDPNSIPGVPFDIGESYAGNLANTPAGNSSLFFWYFPSENPEAKNEITIWLNGGPGCSSMIGLLQENGPFLWQPGTDGPVKNPYAWSKLTNMVWVDQPAGTGFSPGPPTVKDEIDVANQFSDFWKNFMDTFDLHHSDVYLAGESYAGQYIPYIASGMLDRKDSEYFNVQGITIIDPSIGATEVIIDAPSVPALHRFNNIIDLNETFVNDITKKWESCGYKKFMDDALKFPPAGPMTVPGKSAGCDVWDEIIAAVKEVNPCFNIYHLRDNCPSPSNVMNGPKNFFNNKQIQEAIHAHPTDYRLCGESQIFGPHRNDRSVPSSYGPLASVIERTNNTIIAHGDLDFLLFTEGSLASIQNMTWGGLQGFQKEPSDKFYVPYKDGSEVGGAGFVGKTHRERGLTWVTVDLAGHEIPQYAPTAAYRMLEYMLGRVQSLTETH.

An N-terminal signal peptide occupies residues 1–18 (MRFTQIVAAALCLGATEA). Residue Asn-88 is glycosylated (N-linked (GlcNAc...) asparagine). The active site involves Ser-204. N-linked (GlcNAc...) asparagine glycans are attached at residues Asn-263 and Asn-393. Residue Asp-403 is part of the active site. The N-linked (GlcNAc...) asparagine glycan is linked to Asn-417. His-469 is an active-site residue.

This sequence belongs to the peptidase S10 family.

It is found in the secreted. The catalysed reaction is Release of a C-terminal amino acid with broad specificity.. Functionally, involved in degradation of small peptides. The chain is Carboxypeptidase Y homolog ARB_02032 from Arthroderma benhamiae (strain ATCC MYA-4681 / CBS 112371) (Trichophyton mentagrophytes).